We begin with the raw amino-acid sequence, 536 residues long: Lariat debranching enzyme (536 aa).

4 residues coordinate a divalent metal cation: C8, H10, D39, and N84. Residues 124-154 (SGIFKSHDYRKGHFECPPYNQQTIRSAYHVR) are lariat recognition loop. Residues H174, H226, and H228 each contribute to the a divalent metal cation site. The disordered stretch occupies residues 388 to 536 (EEGSVRGEYE…YAAEDEDEAK (149 aa)). Residues 414–426 (EYNTDNSGLSSIN) are compositionally biased toward polar residues. The segment covering 430–441 (IMLDDEGGDEDL) has biased composition (acidic residues). The segment covering 484 to 504 (ELEKSGVNKQVEEKSLNERPL) has biased composition (basic and acidic residues).

It belongs to the lariat debranching enzyme family. The cofactor is Fe(2+). Requires Zn(2+) as cofactor. Mn(2+) serves as cofactor.

The protein resides in the nucleus. With respect to regulation, active in presence of diverse metals including Fe(2+), Zn(2+), Mn(2+). Also activated by Ca(2+). Binds two metal cations in two adjacent alpha and beta metal-binding pockets. Cleaves the 2'-5' phosphodiester linkage at the branch point of excised lariat intron RNA and converts them into linear molecules that can be subsequently degraded, thereby facilitating ribonucleotide turnover. Linked to its role in pre-mRNA processing mechanism, may also participate in retrovirus replication and have an antiviral cell-intrinsic defense function. In Gallus gallus (Chicken), this protein is Lariat debranching enzyme (DBR1).